Reading from the N-terminus, the 138-residue chain is Small ribosomal subunit protein uS11c (138 aa).

The interval 1-24 is disordered; sequence MIKPIPRISSRRNGRIGSRKTGRR. The segment covering 9 to 24 has biased composition (basic residues); the sequence is SSRRNGRIGSRKTGRR.

Belongs to the universal ribosomal protein uS11 family. As to quaternary structure, part of the 30S ribosomal subunit.

The protein resides in the plastid. The protein localises to the chloroplast. The sequence is that of Small ribosomal subunit protein uS11c from Lemna minor (Common duckweed).